The sequence spans 135 residues: uncharacterized protein (135 aa).

The protein belongs to the transcriptional regulatory CopG/NikR family.

This is an uncharacterized protein from Methanocaldococcus jannaschii (strain ATCC 43067 / DSM 2661 / JAL-1 / JCM 10045 / NBRC 100440) (Methanococcus jannaschii).